Reading from the N-terminus, the 487-residue chain is Glutamyl-tRNA(Gln) amidotransferase subunit A (487 aa).

Catalysis depends on charge relay system residues lysine 78 and serine 153. Serine 177 (acyl-ester intermediate) is an active-site residue.

Belongs to the amidase family. GatA subfamily. As to quaternary structure, heterotrimer of A, B and C subunits.

It catalyses the reaction L-glutamyl-tRNA(Gln) + L-glutamine + ATP + H2O = L-glutaminyl-tRNA(Gln) + L-glutamate + ADP + phosphate + H(+). Functionally, allows the formation of correctly charged Gln-tRNA(Gln) through the transamidation of misacylated Glu-tRNA(Gln) in organisms which lack glutaminyl-tRNA synthetase. The reaction takes place in the presence of glutamine and ATP through an activated gamma-phospho-Glu-tRNA(Gln). The chain is Glutamyl-tRNA(Gln) amidotransferase subunit A from Oleidesulfovibrio alaskensis (strain ATCC BAA-1058 / DSM 17464 / G20) (Desulfovibrio alaskensis).